A 103-amino-acid polypeptide reads, in one-letter code: Large ribosomal subunit protein bL21 (103 aa).

Belongs to the bacterial ribosomal protein bL21 family. As to quaternary structure, part of the 50S ribosomal subunit. Contacts protein L20.

Functionally, this protein binds to 23S rRNA in the presence of protein L20. In Polaromonas naphthalenivorans (strain CJ2), this protein is Large ribosomal subunit protein bL21.